Here is a 120-residue protein sequence, read N- to C-terminus: MVSSKDIIQRRALRVRRRIKMVSHDRPRLSVYRSNQNIYAQIIDDSRGCTLVSASTLEGDLKKSLKSGSDKQAAFAVGKLIAERAKKAGVNEVVFDRGAYVYHGRVKALAEAAREGGLNF.

This sequence belongs to the universal ribosomal protein uL18 family. In terms of assembly, part of the 50S ribosomal subunit; part of the 5S rRNA/L5/L18/L25 subcomplex. Contacts the 5S and 23S rRNAs.

This is one of the proteins that bind and probably mediate the attachment of the 5S RNA into the large ribosomal subunit, where it forms part of the central protuberance. This chain is Large ribosomal subunit protein uL18, found in Bartonella quintana (strain Toulouse) (Rochalimaea quintana).